Here is a 61-residue protein sequence, read N- to C-terminus: Small ribosomal subunit protein uS14 (61 aa).

Zn(2+)-binding residues include Cys24, Cys27, Cys40, and Cys43.

It belongs to the universal ribosomal protein uS14 family. Zinc-binding uS14 subfamily. In terms of assembly, part of the 30S ribosomal subunit. Contacts proteins S3 and S10. Zn(2+) is required as a cofactor.

Its function is as follows. Binds 16S rRNA, required for the assembly of 30S particles and may also be responsible for determining the conformation of the 16S rRNA at the A site. This is Small ribosomal subunit protein uS14 from Thermodesulfovibrio yellowstonii (strain ATCC 51303 / DSM 11347 / YP87).